Here is a 288-residue protein sequence, read N- to C-terminus: Bifunctional protein FolD (288 aa).

NADP(+)-binding positions include 166-168, Ser-191, and Ile-232; that span reads GRS.

This sequence belongs to the tetrahydrofolate dehydrogenase/cyclohydrolase family. As to quaternary structure, homodimer.

It carries out the reaction (6R)-5,10-methylene-5,6,7,8-tetrahydrofolate + NADP(+) = (6R)-5,10-methenyltetrahydrofolate + NADPH. The catalysed reaction is (6R)-5,10-methenyltetrahydrofolate + H2O = (6R)-10-formyltetrahydrofolate + H(+). It functions in the pathway one-carbon metabolism; tetrahydrofolate interconversion. Catalyzes the oxidation of 5,10-methylenetetrahydrofolate to 5,10-methenyltetrahydrofolate and then the hydrolysis of 5,10-methenyltetrahydrofolate to 10-formyltetrahydrofolate. This Rickettsia massiliae (strain Mtu5) protein is Bifunctional protein FolD.